Consider the following 101-residue polypeptide: Large ribosomal subunit protein bL21 (101 aa).

Belongs to the bacterial ribosomal protein bL21 family. As to quaternary structure, part of the 50S ribosomal subunit. Contacts protein L20.

Its function is as follows. This protein binds to 23S rRNA in the presence of protein L20. This chain is Large ribosomal subunit protein bL21, found in Micrococcus luteus (strain ATCC 4698 / DSM 20030 / JCM 1464 / CCM 169 / CCUG 5858 / IAM 1056 / NBRC 3333 / NCIMB 9278 / NCTC 2665 / VKM Ac-2230) (Micrococcus lysodeikticus).